A 338-amino-acid chain; its full sequence is Glycerol-3-phosphate dehydrogenase [NAD(P)+] (338 aa).

Positions 14, 50, and 110 each coordinate NADPH. K110, G141, and S143 together coordinate sn-glycerol 3-phosphate. Residue A145 participates in NADPH binding. Sn-glycerol 3-phosphate contacts are provided by K196, D249, S259, R260, and N261. K196 functions as the Proton acceptor in the catalytic mechanism. R260 is an NADPH binding site. Position 285 (E285) interacts with NADPH.

The protein belongs to the NAD-dependent glycerol-3-phosphate dehydrogenase family.

It localises to the cytoplasm. It carries out the reaction sn-glycerol 3-phosphate + NAD(+) = dihydroxyacetone phosphate + NADH + H(+). The catalysed reaction is sn-glycerol 3-phosphate + NADP(+) = dihydroxyacetone phosphate + NADPH + H(+). Its pathway is membrane lipid metabolism; glycerophospholipid metabolism. Catalyzes the reduction of the glycolytic intermediate dihydroxyacetone phosphate (DHAP) to sn-glycerol 3-phosphate (G3P), the key precursor for phospholipid synthesis. This Malacoplasma penetrans (strain HF-2) (Mycoplasma penetrans) protein is Glycerol-3-phosphate dehydrogenase [NAD(P)+].